The following is a 119-amino-acid chain: Protein TusC (119 aa).

Belongs to the DsrF/TusC family. In terms of assembly, heterohexamer, formed by a dimer of trimers. The hexameric TusBCD complex contains 2 copies each of TusB, TusC and TusD. The TusBCD complex interacts with TusE.

The protein localises to the cytoplasm. Part of a sulfur-relay system required for 2-thiolation of 5-methylaminomethyl-2-thiouridine (mnm(5)s(2)U) at tRNA wobble positions. The protein is Protein TusC of Shigella flexneri serotype 5b (strain 8401).